A 176-amino-acid polypeptide reads, in one-letter code: Small ribosomal subunit protein uS4 (176 aa).

The region spanning 103–165 (RRLQTIVYKK…PTSPYAKRRL (63 aa)) is the S4 RNA-binding domain.

Belongs to the universal ribosomal protein uS4 family. As to quaternary structure, part of the 30S ribosomal subunit. Contacts protein S5. The interaction surface between S4 and S5 is involved in control of translational fidelity.

One of the primary rRNA binding proteins, it binds directly to 16S rRNA where it nucleates assembly of the body of the 30S subunit. Its function is as follows. With S5 and S12 plays an important role in translational accuracy. The polypeptide is Small ribosomal subunit protein uS4 (Hyperthermus butylicus (strain DSM 5456 / JCM 9403 / PLM1-5)).